We begin with the raw amino-acid sequence, 612 residues long: Dihydroxy-acid dehydratase (612 aa).

Residue Asp81 participates in Mg(2+) binding. Cys122 contacts [2Fe-2S] cluster. Positions 123 and 124 each coordinate Mg(2+). N6-carboxylysine is present on Lys124. Cys195 is a [2Fe-2S] cluster binding site. Residue Glu491 coordinates Mg(2+). Ser517 serves as the catalytic Proton acceptor.

This sequence belongs to the IlvD/Edd family. Homodimer. Requires [2Fe-2S] cluster as cofactor. It depends on Mg(2+) as a cofactor.

It carries out the reaction (2R)-2,3-dihydroxy-3-methylbutanoate = 3-methyl-2-oxobutanoate + H2O. It catalyses the reaction (2R,3R)-2,3-dihydroxy-3-methylpentanoate = (S)-3-methyl-2-oxopentanoate + H2O. It participates in amino-acid biosynthesis; L-isoleucine biosynthesis; L-isoleucine from 2-oxobutanoate: step 3/4. Its pathway is amino-acid biosynthesis; L-valine biosynthesis; L-valine from pyruvate: step 3/4. Functionally, functions in the biosynthesis of branched-chain amino acids. Catalyzes the dehydration of (2R,3R)-2,3-dihydroxy-3-methylpentanoate (2,3-dihydroxy-3-methylvalerate) into 2-oxo-3-methylpentanoate (2-oxo-3-methylvalerate) and of (2R)-2,3-dihydroxy-3-methylbutanoate (2,3-dihydroxyisovalerate) into 2-oxo-3-methylbutanoate (2-oxoisovalerate), the penultimate precursor to L-isoleucine and L-valine, respectively. This chain is Dihydroxy-acid dehydratase, found in Sinorhizobium medicae (strain WSM419) (Ensifer medicae).